The primary structure comprises 216 residues: Probable Golgi SNAP receptor complex member 2 (216 aa).

Residues Met1 to Arg194 are Cytoplasmic-facing. The stretch at Gln62–Gln103 forms a coiled coil. The chain crosses the membrane as a helical; Anchor for type IV membrane protein span at residues Ile195–Val215. Position 216 (Leu216) is a topological domain, vesicular.

It belongs to the GOSR2 family. Part of a unique SNARE complex.

It is found in the golgi apparatus. The protein localises to the cis-Golgi network membrane. Its subcellular location is the golgi apparatus membrane. It localises to the endoplasmic reticulum membrane. Involved in transport of proteins from the cis/medial-Golgi to the trans-Golgi network. The protein is Probable Golgi SNAP receptor complex member 2 of Drosophila melanogaster (Fruit fly).